The chain runs to 273 residues: Peptidyl-prolyl cis-trans isomerase E (273 aa).

The region spanning 1 to 48 is the RRM domain; it reads MPMDYQTEKHRGFAFVEFEEVEDAMSAIDNMNESEIFGRTIRVNVARP. A disordered region spans residues 77–103; sequence RKLDEPDIVNPSDTSENVEDLSDEEMR. Residues 115 to 271 form the PPIase cyclophilin-type domain; it reads FFDIRIGNGD…EPVIISRCGE (157 aa).

It belongs to the cyclophilin-type PPIase family. PPIase E subfamily.

It is found in the cytoplasm. The enzyme catalyses [protein]-peptidylproline (omega=180) = [protein]-peptidylproline (omega=0). Its activity is regulated as follows. Binds cyclosporin A (CsA). CsA mediates some of its effects via an inhibitory action on PPIase. In terms of biological role, PPIases accelerate the folding of proteins. It catalyzes the cis-trans isomerization of proline imidic peptide bonds in oligopeptides. The protein is Peptidyl-prolyl cis-trans isomerase E of Schistosoma mansoni (Blood fluke).